Reading from the N-terminus, the 133-residue chain is Small ribosomal subunit protein uS8 (133 aa).

The protein belongs to the universal ribosomal protein uS8 family. As to quaternary structure, part of the 30S ribosomal subunit. Contacts proteins S5 and S12.

One of the primary rRNA binding proteins, it binds directly to 16S rRNA central domain where it helps coordinate assembly of the platform of the 30S subunit. This chain is Small ribosomal subunit protein uS8, found in Prochlorococcus marinus subsp. pastoris (strain CCMP1986 / NIES-2087 / MED4).